We begin with the raw amino-acid sequence, 541 residues long: MLRLARFYSLARTKAIHSHGAPFRPEYALKCGLEIHTQLNTKNKLFSQSTNSATSLVDAPNHHTSYYDIALPGTQPVLNLEAILFAMKLSLALGSQVNSISQFDRKHYFYGDQPQGYQLTQHYRPFARGGKINLSKELDDIDESAKEIGILQLQIEQDTGKSHYTETDKDVITLVDLNRSNVPLIELVTKPDFSDIKQVRAFIKKYQNLVRHLHISSGDLETGAMRVDVNLSINEYARVELKNLPNTSSIINAIKYEYQRQVELISVGDTSSLMEPETRGWTGSSTVKLRSKETTIDYRYMPDPELPYINLAPDVISGVRGLMPQLPDDIMRILMKKPYQLSLKDAKILTYNSNQNDMYNHEALRSYYLDTFREFSKLAGERSNAKLPTNWIIHEFLGDLNKLQIPLAKAKEILPPPVFAQFLKLLHEEVISATSGKMLLFHILENFEQSNCQDLSIPDFSKLIEKFELHAINQVDPQELMDLCNDVIAQHTDDTFIRNLVTGKKKSSLKFLIGQGMRRSQGRIKANEFEKKFKEILNIQW.

This sequence belongs to the GatB/GatE family. GatB subfamily. As to quaternary structure, subunit of the heterotrimeric GatFAB amidotransferase (AdT) complex, composed of A (HER2), B (PET112) and F (YGR102C) subunits.

It is found in the mitochondrion. It catalyses the reaction L-glutamyl-tRNA(Gln) + L-glutamine + ATP + H2O = L-glutaminyl-tRNA(Gln) + L-glutamate + ADP + phosphate + H(+). Allows the formation of correctly charged Gln-tRNA(Gln) through the transamidation of misacylated Glu-tRNA(Gln) in the mitochondria. The reaction takes place in the presence of glutamine and ATP through an activated gamma-phospho-Glu-tRNA(Gln). In Saccharomyces cerevisiae (strain ATCC 204508 / S288c) (Baker's yeast), this protein is Glutamyl-tRNA(Gln) amidotransferase subunit B, mitochondrial.